A 133-amino-acid polypeptide reads, in one-letter code: Small ribosomal subunit protein uS11 (133 aa).

It belongs to the universal ribosomal protein uS11 family. Part of the 30S ribosomal subunit. Interacts with proteins S7 and S18. Binds to IF-3.

Its function is as follows. Located on the platform of the 30S subunit, it bridges several disparate RNA helices of the 16S rRNA. Forms part of the Shine-Dalgarno cleft in the 70S ribosome. The protein is Small ribosomal subunit protein uS11 of Ralstonia nicotianae (strain ATCC BAA-1114 / GMI1000) (Ralstonia solanacearum).